The chain runs to 501 residues: ATP synthase subunit alpha (501 aa).

169 to 176 (GDRQTGKT) provides a ligand contact to ATP.

This sequence belongs to the ATPase alpha/beta chains family. F-type ATPases have 2 components, CF(1) - the catalytic core - and CF(0) - the membrane proton channel. CF(1) has five subunits: alpha(3), beta(3), gamma(1), delta(1), epsilon(1). CF(0) has three main subunits: a(1), b(2) and c(9-12). The alpha and beta chains form an alternating ring which encloses part of the gamma chain. CF(1) is attached to CF(0) by a central stalk formed by the gamma and epsilon chains, while a peripheral stalk is formed by the delta and b chains.

The protein localises to the cell membrane. It catalyses the reaction ATP + H2O + 4 H(+)(in) = ADP + phosphate + 5 H(+)(out). Its function is as follows. Produces ATP from ADP in the presence of a proton gradient across the membrane. The alpha chain is a regulatory subunit. The protein is ATP synthase subunit alpha of Streptococcus uberis (strain ATCC BAA-854 / 0140J).